Here is a 102-residue protein sequence, read N- to C-terminus: Carboxysome shell protein CcmK3 (102 aa).

The BMC domain occupies 4–90 (AVGTIQTLGF…PQENVETVMP (87 aa)).

The protein belongs to the bacterial microcompartments protein family. CcmK subfamily. In terms of assembly, interacts stably with CcmK4, probably forms heterohexamers with a 1:2 CcmK3:CcmK4 stoichiometry. Bulky residues in the pore region probably preclude the formation of homohexamers by this subunit.

The protein resides in the carboxysome. A non-essential, minor shell protein of the carboxysome, a polyhedral inclusion where RuBisCO (ribulose bisphosphate carboxylase, rbcL-rbcS) is sequestered. Hexamers form sheets that form the facets of the polyhedral carboxysome. In PCC 7942 there are several CcmK paralogs with presumably functional differences. This subunit probably only makes heterohexamers with CcmK4. The CcmK3-CcmK4 heterohexmers have been suggested to cap other hexamers, perhaps to alter metabolite flux. This Synechococcus elongatus (strain ATCC 33912 / PCC 7942 / FACHB-805) (Anacystis nidulans R2) protein is Carboxysome shell protein CcmK3.